The following is a 299-amino-acid chain: Probable transport accessory protein MmpS3 (299 aa).

The interval 1–72 is disordered; that stretch reads MSGPNPPGRE…EHVTGGPYVP (72 aa). A helical transmembrane segment spans residues 101 to 121; that stretch reads VVGVAAIIAAVALVVSVSLLV. Residues 128 to 139 show a composition bias toward polar residues; sequence KLATGDTTSSAP. Positions 128–213 are disordered; that stretch reads KLATGDTTSS…TTTTPTGPRQ (86 aa). Positions 150-163 are enriched in pro residues; that stretch reads PAPPPPPPAPPPTT. A compositionally biased stretch (low complexity) spans 164–176; that stretch reads EIPTATETQTVTV. Over residues 177–193 the composition is skewed to pro residues; it reads TPPPPPPPATTTAPPPA.

This sequence belongs to the MmpS family.

It localises to the cell membrane. This is Probable transport accessory protein MmpS3 (mmpS3) from Mycobacterium tuberculosis (strain CDC 1551 / Oshkosh).